The sequence spans 333 residues: Probable endo-beta-1,4-glucanase B (333 aa).

The first 17 residues, 1–17 (MKFRNLFFAAVAGSAVA), serve as a signal peptide directing secretion. N-linked (GlcNAc...) asparagine glycosylation is found at N37 and N100. Catalysis depends on E160, which acts as the Proton donor. The Nucleophile role is filled by E267.

Belongs to the glycosyl hydrolase 5 (cellulase A) family.

The protein localises to the secreted. The enzyme catalyses Endohydrolysis of (1-&gt;4)-beta-D-glucosidic linkages in cellulose, lichenin and cereal beta-D-glucans.. In terms of biological role, has endoglucanase activity on substrates containing beta-1,4 glycosidic bonds, like in carboxymethylcellulose (CMC), hydroxyethylcellulose (HEC) and beta-glucan. Involved in the degradation of complex natural cellulosic substrates. The sequence is that of Probable endo-beta-1,4-glucanase B (eglB) from Aspergillus oryzae (strain ATCC 42149 / RIB 40) (Yellow koji mold).